The primary structure comprises 59 residues: Large ribosomal subunit protein bL32c (59 aa).

Positions 37–59 (SRSFSSGNEHPKPKGFSGQQTNK) are disordered.

Belongs to the bacterial ribosomal protein bL32 family.

It localises to the plastid. Its subcellular location is the chloroplast. The chain is Large ribosomal subunit protein bL32c from Hordeum vulgare (Barley).